A 195-amino-acid chain; its full sequence is dTTP/UTP pyrophosphatase (195 aa).

The Proton acceptor role is filled by Asp73.

Belongs to the Maf family. YhdE subfamily. A divalent metal cation serves as cofactor.

The protein resides in the cytoplasm. The catalysed reaction is dTTP + H2O = dTMP + diphosphate + H(+). It carries out the reaction UTP + H2O = UMP + diphosphate + H(+). Nucleoside triphosphate pyrophosphatase that hydrolyzes dTTP and UTP. May have a dual role in cell division arrest and in preventing the incorporation of modified nucleotides into cellular nucleic acids. The chain is dTTP/UTP pyrophosphatase from Deinococcus radiodurans (strain ATCC 13939 / DSM 20539 / JCM 16871 / CCUG 27074 / LMG 4051 / NBRC 15346 / NCIMB 9279 / VKM B-1422 / R1).